Here is a 554-residue protein sequence, read N- to C-terminus: Phenylalanine--tRNA ligase beta subunit (554 aa).

A B5 domain is found at 276–351; sequence LTPKSRIISV…INYGYEKFDG (76 aa). Asp329, Asp335, Glu338, and Glu339 together coordinate Mg(2+).

The protein belongs to the phenylalanyl-tRNA synthetase beta subunit family. Type 2 subfamily. In terms of assembly, tetramer of two alpha and two beta subunits. Requires Mg(2+) as cofactor.

The protein localises to the cytoplasm. It carries out the reaction tRNA(Phe) + L-phenylalanine + ATP = L-phenylalanyl-tRNA(Phe) + AMP + diphosphate + H(+). The sequence is that of Phenylalanine--tRNA ligase beta subunit from Methanococcus maripaludis (strain DSM 14266 / JCM 13030 / NBRC 101832 / S2 / LL).